The sequence spans 212 residues: Methylthioribulose-1-phosphate dehydratase (212 aa).

Residues H97 and H99 each contribute to the Zn(2+) site.

Belongs to the aldolase class II family. MtnB subfamily. In terms of assembly, homotetramer. Requires Zn(2+) as cofactor.

The enzyme catalyses 5-(methylsulfanyl)-D-ribulose 1-phosphate = 5-methylsulfanyl-2,3-dioxopentyl phosphate + H2O. It functions in the pathway amino-acid biosynthesis; L-methionine biosynthesis via salvage pathway; L-methionine from S-methyl-5-thio-alpha-D-ribose 1-phosphate: step 2/6. In terms of biological role, catalyzes the dehydration of methylthioribulose-1-phosphate (MTRu-1-P) into 2,3-diketo-5-methylthiopentyl-1-phosphate (DK-MTP-1-P). The sequence is that of Methylthioribulose-1-phosphate dehydratase from Bacillus thuringiensis subsp. konkukian (strain 97-27).